Here is a 184-residue protein sequence, read N- to C-terminus: NADH-quinone oxidoreductase subunit B (184 aa).

[4Fe-4S] cluster-binding residues include Cys37, Cys38, Cys103, and Cys132.

It belongs to the complex I 20 kDa subunit family. As to quaternary structure, NDH-1 is composed of 14 different subunits. Subunits NuoB, C, D, E, F, and G constitute the peripheral sector of the complex. [4Fe-4S] cluster is required as a cofactor.

It is found in the cell membrane. The enzyme catalyses a quinone + NADH + 5 H(+)(in) = a quinol + NAD(+) + 4 H(+)(out). NDH-1 shuttles electrons from NADH, via FMN and iron-sulfur (Fe-S) centers, to quinones in the respiratory chain. The immediate electron acceptor for the enzyme in this species is believed to be a menaquinone. Couples the redox reaction to proton translocation (for every two electrons transferred, four hydrogen ions are translocated across the cytoplasmic membrane), and thus conserves the redox energy in a proton gradient. This chain is NADH-quinone oxidoreductase subunit B, found in Mycolicibacterium paratuberculosis (strain ATCC BAA-968 / K-10) (Mycobacterium paratuberculosis).